A 78-amino-acid chain; its full sequence is uncharacterized protein (78 aa).

Residues Gln-49 to Leu-78 form a disordered region. Over residues Glu-54–Gln-65 the composition is skewed to polar residues. Positions Arg-68–Leu-78 are enriched in basic and acidic residues.

This is an uncharacterized protein from Saccharomyces cerevisiae (strain ATCC 204508 / S288c) (Baker's yeast).